We begin with the raw amino-acid sequence, 84 residues long: Large ribosomal subunit protein bL27 (84 aa).

Residues 1–25 are disordered; sequence MAHKKAGGSSRNGRDSNGQRRGVKR.

This sequence belongs to the bacterial ribosomal protein bL27 family.

The protein is Large ribosomal subunit protein bL27 of Desulfatibacillum aliphaticivorans.